The chain runs to 247 residues: Phosphatidylserine decarboxylase proenzyme (247 aa).

Serine 206 (schiff-base intermediate with substrate; via pyruvic acid) is an active-site residue. Serine 206 is modified (pyruvic acid (Ser); by autocatalysis).

Belongs to the phosphatidylserine decarboxylase family. PSD-A subfamily. As to quaternary structure, heterodimer of a large membrane-associated beta subunit and a small pyruvoyl-containing alpha subunit. Requires pyruvate as cofactor. Post-translationally, is synthesized initially as an inactive proenzyme. Formation of the active enzyme involves a self-maturation process in which the active site pyruvoyl group is generated from an internal serine residue via an autocatalytic post-translational modification. Two non-identical subunits are generated from the proenzyme in this reaction, and the pyruvate is formed at the N-terminus of the alpha chain, which is derived from the carboxyl end of the proenzyme. The post-translation cleavage follows an unusual pathway, termed non-hydrolytic serinolysis, in which the side chain hydroxyl group of the serine supplies its oxygen atom to form the C-terminus of the beta chain, while the remainder of the serine residue undergoes an oxidative deamination to produce ammonia and the pyruvoyl prosthetic group on the alpha chain.

The protein resides in the cell membrane. The enzyme catalyses a 1,2-diacyl-sn-glycero-3-phospho-L-serine + H(+) = a 1,2-diacyl-sn-glycero-3-phosphoethanolamine + CO2. The protein operates within phospholipid metabolism; phosphatidylethanolamine biosynthesis; phosphatidylethanolamine from CDP-diacylglycerol: step 2/2. Functionally, catalyzes the formation of phosphatidylethanolamine (PtdEtn) from phosphatidylserine (PtdSer). This chain is Phosphatidylserine decarboxylase proenzyme, found in Nitrobacter winogradskyi (strain ATCC 25391 / DSM 10237 / CIP 104748 / NCIMB 11846 / Nb-255).